A 467-amino-acid chain; its full sequence is Asparagine--tRNA ligase (467 aa).

It belongs to the class-II aminoacyl-tRNA synthetase family. In terms of assembly, homodimer.

The protein resides in the cytoplasm. It carries out the reaction tRNA(Asn) + L-asparagine + ATP = L-asparaginyl-tRNA(Asn) + AMP + diphosphate + H(+). The sequence is that of Asparagine--tRNA ligase from Haemophilus ducreyi (strain 35000HP / ATCC 700724).